Reading from the N-terminus, the 275-residue chain is Dermonecrotic toxin LarSicTox-alphaIII1 (275 aa).

His-5 is a catalytic residue. Mg(2+)-binding residues include Glu-25 and Asp-27. His-41 serves as the catalytic Nucleophile. Cystine bridges form between Cys-45–Cys-51 and Cys-47–Cys-190. Asp-85 contributes to the Mg(2+) binding site. Asn-252 carries N-linked (GlcNAc...) asparagine glycosylation.

The protein belongs to the arthropod phospholipase D family. Class II subfamily. Mg(2+) serves as cofactor. As to expression, expressed by the venom gland.

It is found in the secreted. It catalyses the reaction an N-(acyl)-sphingosylphosphocholine = an N-(acyl)-sphingosyl-1,3-cyclic phosphate + choline. The enzyme catalyses an N-(acyl)-sphingosylphosphoethanolamine = an N-(acyl)-sphingosyl-1,3-cyclic phosphate + ethanolamine. The catalysed reaction is a 1-acyl-sn-glycero-3-phosphocholine = a 1-acyl-sn-glycero-2,3-cyclic phosphate + choline. It carries out the reaction a 1-acyl-sn-glycero-3-phosphoethanolamine = a 1-acyl-sn-glycero-2,3-cyclic phosphate + ethanolamine. Its function is as follows. Dermonecrotic toxins cleave the phosphodiester linkage between the phosphate and headgroup of certain phospholipids (sphingolipid and lysolipid substrates), forming an alcohol (often choline) and a cyclic phosphate. This toxin acts on sphingomyelin (SM). It may also act on ceramide phosphoethanolamine (CPE), lysophosphatidylcholine (LPC) and lysophosphatidylethanolamine (LPE), but not on lysophosphatidylserine (LPS), and lysophosphatidylglycerol (LPG). It acts by transphosphatidylation, releasing exclusively cyclic phosphate products as second products. Induces dermonecrosis, hemolysis, increased vascular permeability, edema, inflammatory response, and platelet aggregation. The protein is Dermonecrotic toxin LarSicTox-alphaIII1 of Loxosceles arizonica (Arizona brown spider).